The following is a 505-amino-acid chain: Transcription factor APG (505 aa).

7 disordered regions span residues 1–40 (MLRG…CSAA), 61–99 (GAAN…DTAP), 119–156 (PAAA…SGGG), 169–242 (PLQQ…APTT), 256–312 (AQRL…SQDE), 324–344 (RRSA…NLSE), and 469–505 (PPPP…VKQA). The segment covering 23 to 33 (PLRPPPPPPFQ) has biased composition (pro residues). The span at 131–144 (CSSSHGAVVPSTSA) shows a compositional bias: polar residues. Residues 174–199 (PSGGETASASASAAATSTVPVESTVV) show a composition bias toward low complexity. A compositionally biased stretch (polar residues) spans 200 to 212 (QAATNRLRSTPLF). Residues 222 to 239 (PPKPSPRAAAPPPPPPLA) show a composition bias toward pro residues. Positions 288–299 (GDRRQLNWRDSH) are enriched in basic and acidic residues. The span at 300–310 (NNQSAEWSASQ) shows a compositional bias: polar residues. Positions 324–334 (RRSAARSSKRS) are enriched in basic residues. Basic and acidic residues predominate over residues 335–344 (RTAEVHNLSE). In terms of domain architecture, bHLH spans 335–384 (RTAEVHNLSERRRRDRINEKMRALQELIPNCNKIDKASMLEEAIEYLKTL). Residues 492–505 (GAADAGNAPAVKQA) show a composition bias toward low complexity.

This sequence belongs to the bHLH protein family. As to quaternary structure, homodimer and heterodimer with ILI5 or ILI6.

Its subcellular location is the nucleus. In terms of biological role, atypical bHLH transcription factor that acts as a negative regulator of grain size. Binds the transcription factor ILI6 and forms a heterodimer of antagonistic bHLH transcription factors that regulates grain length and weight by controlling cell elongation in lemma and palea. May be involved in the control of lamina inclination through brassinosteroid signaling pathway. The polypeptide is Transcription factor APG (APG) (Oryza sativa subsp. japonica (Rice)).